We begin with the raw amino-acid sequence, 424 residues long: Serine hydroxymethyltransferase 2 (424 aa).

(6S)-5,6,7,8-tetrahydrofolate contacts are provided by residues L125 and G129–L131. K234 bears the N6-(pyridoxal phosphate)lysine mark. Residue E250 coordinates (6S)-5,6,7,8-tetrahydrofolate.

It belongs to the SHMT family. As to quaternary structure, homodimer. Pyridoxal 5'-phosphate is required as a cofactor.

The protein resides in the cytoplasm. The catalysed reaction is (6R)-5,10-methylene-5,6,7,8-tetrahydrofolate + glycine + H2O = (6S)-5,6,7,8-tetrahydrofolate + L-serine. It functions in the pathway one-carbon metabolism; tetrahydrofolate interconversion. Its pathway is amino-acid biosynthesis; glycine biosynthesis; glycine from L-serine: step 1/1. Its function is as follows. Catalyzes the reversible interconversion of serine and glycine with tetrahydrofolate (THF) serving as the one-carbon carrier. This reaction serves as the major source of one-carbon groups required for the biosynthesis of purines, thymidylate, methionine, and other important biomolecules. Also exhibits THF-independent aldolase activity toward beta-hydroxyamino acids, producing glycine and aldehydes, via a retro-aldol mechanism. The polypeptide is Serine hydroxymethyltransferase 2 (Cupriavidus pinatubonensis (strain JMP 134 / LMG 1197) (Cupriavidus necator (strain JMP 134))).